A 267-amino-acid chain; its full sequence is Tryptophan synthase alpha chain (267 aa).

Residues glutamate 47 and aspartate 58 each act as proton acceptor in the active site.

Belongs to the TrpA family. In terms of assembly, tetramer of two alpha and two beta chains.

The catalysed reaction is (1S,2R)-1-C-(indol-3-yl)glycerol 3-phosphate + L-serine = D-glyceraldehyde 3-phosphate + L-tryptophan + H2O. Its pathway is amino-acid biosynthesis; L-tryptophan biosynthesis; L-tryptophan from chorismate: step 5/5. In terms of biological role, the alpha subunit is responsible for the aldol cleavage of indoleglycerol phosphate to indole and glyceraldehyde 3-phosphate. This is Tryptophan synthase alpha chain from Chlorobaculum parvum (strain DSM 263 / NCIMB 8327) (Chlorobium vibrioforme subsp. thiosulfatophilum).